A 166-amino-acid polypeptide reads, in one-letter code: NAD(P)H-quinone oxidoreductase subunit I, chloroplastic (166 aa).

4Fe-4S ferredoxin-type domains lie at 55–84 (GRIHFEFDKCIACEVCVRVCPIDLPVVDWK) and 95–124 (LNYSIDFGICIFCGNCVEYCPTNCLSMTEE). Residues C64, C67, C70, C74, C104, C107, C110, and C114 each contribute to the [4Fe-4S] cluster site.

The protein belongs to the complex I 23 kDa subunit family. In terms of assembly, NDH is composed of at least 16 different subunits, 5 of which are encoded in the nucleus. It depends on [4Fe-4S] cluster as a cofactor.

The protein resides in the plastid. Its subcellular location is the chloroplast thylakoid membrane. It catalyses the reaction a plastoquinone + NADH + (n+1) H(+)(in) = a plastoquinol + NAD(+) + n H(+)(out). The catalysed reaction is a plastoquinone + NADPH + (n+1) H(+)(in) = a plastoquinol + NADP(+) + n H(+)(out). Its function is as follows. NDH shuttles electrons from NAD(P)H:plastoquinone, via FMN and iron-sulfur (Fe-S) centers, to quinones in the photosynthetic chain and possibly in a chloroplast respiratory chain. The immediate electron acceptor for the enzyme in this species is believed to be plastoquinone. Couples the redox reaction to proton translocation, and thus conserves the redox energy in a proton gradient. In Tridax balbisioides (Coatbuttons), this protein is NAD(P)H-quinone oxidoreductase subunit I, chloroplastic.